Here is a 631-residue protein sequence, read N- to C-terminus: Shootin-1 (631 aa).

Met-1 is modified (N-acetylmethionine). A phosphoserine mark is found at Ser-3 and Ser-4. Positions 7 to 353 (EKQLQLITSL…RVNQSENSVP (347 aa)) form a coiled coil. At Ser-101 the chain carries Phosphoserine; by PAK1. Position 249 is a phosphoserine (Ser-249). Residues 343 to 511 (KRVNQSENSV…SESKSMPVLG (169 aa)) are disordered. The span at 352–369 (VPPPPPPPPPLPPPPPNP) shows a compositional bias: pro residues. Residue Ser-375 is modified to Phosphoserine. The span at 403–418 (TDLKRQAVEEMMDRIK) shows a compositional bias: basic and acidic residues. A compositionally biased stretch (polar residues) spans 456–465 (LNKSTSSRSL). A Phosphoserine modification is found at Ser-473. The residue at position 487 (Thr-487) is a Phosphothreonine. Residues 490–505 (ADSSSPTGILATSESK) show a composition bias toward polar residues. Position 494 is a phosphoserine (Ser-494). A Phosphothreonine modification is found at Thr-496. Residues Ser-506, Ser-515, Ser-532, and Ser-534 each carry the phosphoserine modification. Disordered stretches follow at residues 524–566 (KTLE…IGCR) and 579–631 (VVVL…SSNC). A Phosphothreonine modification is found at Thr-537. Residues 550-561 (CTSSKVTFQPPS) are compositionally biased toward polar residues. Residues 590-631 (PQTKDQVAEKDPTQHKEDEGEIQPENKEDSIENVRETDSSNC) are compositionally biased toward basic and acidic residues.

Belongs to the shootin family. Interacts with L1CAM; this interaction occurs in axonal growth cones. Interacts with actin filament retrograde flow; this interaction is enhanced in a netrin-1- and PAK1-dependent manner and promotes F-actin-substrate coupling and concomitant formation of traction forces at axonal growth cones. Interacts with RUFY3. Interacts with PFN2. Interacts (via N-terminus) with KIF20B; this interaction is direct and promotes the association of SHTN1 to microtubules in primary neurons. Associates with microtubule. Post-translationally, phosphorylated on Ser-101 and Ser-249 by PAK1 through a CDC42- and RAC1-dependent signaling pathway, which enhances its association with F-actin retrograde flow in filopodia and lamellipodia of axonal growth cones. Phosphorylation on Ser-101 and Ser-249 is increased by netrin-1.

Its subcellular location is the perikaryon. It is found in the cell projection. The protein localises to the axon. It localises to the growth cone. The protein resides in the cytoplasm. Its subcellular location is the cytoskeleton. It is found in the filopodium. The protein localises to the lamellipodium. Functionally, involved in the generation of internal asymmetric signals required for neuronal polarization and neurite outgrowth. Mediates netrin-1-induced F-actin-substrate coupling or 'clutch engagement' within the axon growth cone through activation of CDC42, RAC1 and PAK1-dependent signaling pathway, thereby converting the F-actin retrograde flow into traction forces, concomitantly with filopodium extension and axon outgrowth. Plays a role in cytoskeletal organization by regulating the subcellular localization of phosphoinositide 3-kinase (PI3K) activity at the axonal growth cone. Also plays a role in regenerative neurite outgrowth. In the developing cortex, cooperates with KIF20B to promote both the transition from the multipolar to the bipolar stage and the radial migration of cortical neurons from the ventricular zone toward the superficial layer of the neocortex. Involved in the accumulation of phosphatidylinositol 3,4,5-trisphosphate (PIP3) in the growth cone of primary hippocampal neurons. The polypeptide is Shootin-1 (Homo sapiens (Human)).